Here is a 197-residue protein sequence, read N- to C-terminus: Nucleoside triphosphate pyrophosphatase (197 aa).

Asp-75 acts as the Proton acceptor in catalysis.

It belongs to the Maf family. A divalent metal cation serves as cofactor.

The protein resides in the cytoplasm. It carries out the reaction a ribonucleoside 5'-triphosphate + H2O = a ribonucleoside 5'-phosphate + diphosphate + H(+). It catalyses the reaction a 2'-deoxyribonucleoside 5'-triphosphate + H2O = a 2'-deoxyribonucleoside 5'-phosphate + diphosphate + H(+). In terms of biological role, nucleoside triphosphate pyrophosphatase. May have a dual role in cell division arrest and in preventing the incorporation of modified nucleotides into cellular nucleic acids. The protein is Nucleoside triphosphate pyrophosphatase of Haemophilus ducreyi (strain 35000HP / ATCC 700724).